A 546-amino-acid polypeptide reads, in one-letter code: Chaperonin GroEL (546 aa).

ATP is bound by residues 30 to 33 (TLGP), Lys-51, 87 to 91 (DGTTT), Gly-415, 479 to 481 (NAA), and Asp-495. The segment at 527–546 (DKPAAPPMPGGMGGMGGMDF) is disordered. The span at 536–546 (GGMGGMGGMDF) shows a compositional bias: gly residues.

It belongs to the chaperonin (HSP60) family. As to quaternary structure, forms a cylinder of 14 subunits composed of two heptameric rings stacked back-to-back. Interacts with the co-chaperonin GroES.

The protein resides in the cytoplasm. The enzyme catalyses ATP + H2O + a folded polypeptide = ADP + phosphate + an unfolded polypeptide.. In terms of biological role, together with its co-chaperonin GroES, plays an essential role in assisting protein folding. The GroEL-GroES system forms a nano-cage that allows encapsulation of the non-native substrate proteins and provides a physical environment optimized to promote and accelerate protein folding. This is Chaperonin GroEL from Bordetella petrii (strain ATCC BAA-461 / DSM 12804 / CCUG 43448).